The primary structure comprises 314 residues: Cytochrome f (314 aa).

The first 29 residues, 1–29 (MTRSISISVLIISVLIMIYVITRTSISNA), serve as a signal peptide directing secretion. Heme contacts are provided by Y30, C50, C53, and H54. The helical transmembrane segment at 280-300 (VQGLLFFLASVILAQIFLVLK) threads the bilayer.

It belongs to the cytochrome f family. In terms of assembly, the 4 large subunits of the cytochrome b6-f complex are cytochrome b6, subunit IV (17 kDa polypeptide, petD), cytochrome f and the Rieske protein, while the 4 small subunits are PetG, PetL, PetM and PetN. The complex functions as a dimer. Heme serves as cofactor.

Its subcellular location is the plastid. It localises to the chloroplast thylakoid membrane. Functionally, component of the cytochrome b6-f complex, which mediates electron transfer between photosystem II (PSII) and photosystem I (PSI), cyclic electron flow around PSI, and state transitions. The protein is Cytochrome f of Illicium oligandrum (Star anise).